The primary structure comprises 432 residues: Enolase (432 aa).

Gln-163 is a binding site for (2R)-2-phosphoglycerate. The active-site Proton donor is the Glu-205. Mg(2+) is bound by residues Asp-242, Glu-285, and Asp-312. Positions 337, 366, 367, and 388 each coordinate (2R)-2-phosphoglycerate. Lys-337 (proton acceptor) is an active-site residue.

Belongs to the enolase family. Mg(2+) is required as a cofactor.

Its subcellular location is the cytoplasm. The protein resides in the secreted. It localises to the cell surface. The enzyme catalyses (2R)-2-phosphoglycerate = phosphoenolpyruvate + H2O. Its pathway is carbohydrate degradation; glycolysis; pyruvate from D-glyceraldehyde 3-phosphate: step 4/5. In terms of biological role, catalyzes the reversible conversion of 2-phosphoglycerate (2-PG) into phosphoenolpyruvate (PEP). It is essential for the degradation of carbohydrates via glycolysis. This chain is Enolase, found in Desulfovibrio desulfuricans (strain ATCC 27774 / DSM 6949 / MB).